Consider the following 162-residue polypeptide: MEFKRKKEFKMIEKISKGLSLNKQKEQTVLEILPHEDENSKLLRLKRGSWESQKEPWLVYDEKGKLHALLSIETLSKMIEHFKNAEKETLFLKLEKSILQHLPLDFHDVWTVAMEEIKKSKKSDMDFDALIKKIKTEHPNLFLDLKDLYLPEGASVISTIER.

It belongs to the UPF0763 family.

This Sulfurospirillum deleyianum (strain ATCC 51133 / DSM 6946 / 5175) protein is UPF0763 protein Sdel_0383.